The sequence spans 469 residues: Aspartyl/glutamyl-tRNA(Asn/Gln) amidotransferase subunit B (469 aa).

It belongs to the GatB/GatE family. GatB subfamily. In terms of assembly, heterotrimer of A, B and C subunits.

It catalyses the reaction L-glutamyl-tRNA(Gln) + L-glutamine + ATP + H2O = L-glutaminyl-tRNA(Gln) + L-glutamate + ADP + phosphate + H(+). The enzyme catalyses L-aspartyl-tRNA(Asn) + L-glutamine + ATP + H2O = L-asparaginyl-tRNA(Asn) + L-glutamate + ADP + phosphate + 2 H(+). Its function is as follows. Allows the formation of correctly charged Asn-tRNA(Asn) or Gln-tRNA(Gln) through the transamidation of misacylated Asp-tRNA(Asn) or Glu-tRNA(Gln) in organisms which lack either or both of asparaginyl-tRNA or glutaminyl-tRNA synthetases. The reaction takes place in the presence of glutamine and ATP through an activated phospho-Asp-tRNA(Asn) or phospho-Glu-tRNA(Gln). In Thermus thermophilus (strain ATCC BAA-163 / DSM 7039 / HB27), this protein is Aspartyl/glutamyl-tRNA(Asn/Gln) amidotransferase subunit B.